Reading from the N-terminus, the 142-residue chain is HTH-type transcriptional regulator MntR (142 aa).

An HTH dtxR-type domain is found at 1–63 (MPTPSMEDYI…YEKYRGLVLT (63 aa)). Mn(2+)-binding residues include Asp8, Glu11, His77, Glu99, Glu102, and His103.

Belongs to the DtxR/MntR family. In terms of assembly, homodimer.

The protein resides in the cytoplasm. Its activity is regulated as follows. DNA binding is strongly activated by Mn(2+). In terms of biological role, central regulator of manganese homeostasis. The protein is HTH-type transcriptional regulator MntR of Bacillus cereus (strain B4264).